The chain runs to 88 residues: Alpha-conotoxin GVIIIB (88 aa).

A signal peptide spans 1-20 (MMSKMGAMFVLLLLFTLASS). Positions 21-43 (QQEGDVQARKTRPKSDFYRALPR) are excised as a propeptide. A Threonine amide modification is found at T87.

It belongs to the conotoxin S superfamily. Post-translationally, contains 5 disulfide bonds. The predominant peptide contains 2 hydroxyprolines, while 2 minor peptides contains 1 and 3 hydroxyprolines. As to expression, expressed by the venom duct.

Its subcellular location is the secreted. In terms of biological role, alpha-conotoxins act on postsynaptic membranes, they bind to the nicotinic acetylcholine receptors (nAChR) and thus inhibit them. This toxin shows high activity on alpha-9-alpha-10 (CHRNA9-CHRNA10) (IC(50)=9.79 nM). It also shows weak activity on alpha-3-beta-2 (CHRNA3-CHRNB2) (IC(50)~1 uM), alpha-6/alpha-3-beta-2-beta-3 (CHRNA6/CHRNA3-CHRNB2-CHRNB3) (IC(50)~1 uM). The toxin binds to the same or overlapping binding sites than conotoxin RgIA (AC P0C1D0). The sequence is that of Alpha-conotoxin GVIIIB from Conus geographus (Geography cone).